We begin with the raw amino-acid sequence, 321 residues long: Ribosomal protein L11 methyltransferase (321 aa).

Positions 150, 171, 193, and 256 each coordinate S-adenosyl-L-methionine.

This sequence belongs to the methyltransferase superfamily. PrmA family.

It localises to the cytoplasm. The catalysed reaction is L-lysyl-[protein] + 3 S-adenosyl-L-methionine = N(6),N(6),N(6)-trimethyl-L-lysyl-[protein] + 3 S-adenosyl-L-homocysteine + 3 H(+). Functionally, methylates ribosomal protein L11. The protein is Ribosomal protein L11 methyltransferase of Herpetosiphon aurantiacus (strain ATCC 23779 / DSM 785 / 114-95).